The sequence spans 116 residues: Putative transmembrane protein ORF116 (116 aa).

3 helical membrane passes run Ile-20–Leu-40, Leu-53–Ile-73, and Phe-76–Asn-96.

It localises to the host membrane. The protein is Putative transmembrane protein ORF116 of Acidianus bottle-shaped virus (isolate Italy/Pozzuoli) (ABV).